The primary structure comprises 215 residues: Adenylate kinase (215 aa).

10 to 15 contacts ATP; sequence GAGKGT. The segment at 30–59 is NMP; the sequence is STGDILRENVKNQTELGKKAKEYMDKGLLV. Residues Thr31, Arg36, 57–59, 85–88, and Gln92 contribute to the AMP site; these read LLV and GFPR. Residues 126-163 are LID; that stretch reads GRRICKSCGASFHVVYRPPKKEGICDICGGQLYQREDD. ATP is bound at residue Arg127. Positions 130 and 133 each coordinate Zn(2+). Residue 136-137 coordinates ATP; it reads SF. Residues Cys150 and Cys153 each contribute to the Zn(2+) site. Positions 160 and 171 each coordinate AMP. ATP is bound at residue Glu199.

It belongs to the adenylate kinase family. As to quaternary structure, monomer.

The protein resides in the cytoplasm. It catalyses the reaction AMP + ATP = 2 ADP. It participates in purine metabolism; AMP biosynthesis via salvage pathway; AMP from ADP: step 1/1. Functionally, catalyzes the reversible transfer of the terminal phosphate group between ATP and AMP. Plays an important role in cellular energy homeostasis and in adenine nucleotide metabolism. In Caldicellulosiruptor saccharolyticus (strain ATCC 43494 / DSM 8903 / Tp8T 6331), this protein is Adenylate kinase.